A 591-amino-acid polypeptide reads, in one-letter code: Serine/threonine-protein phosphatase PP2A 65 kDa regulatory subunit (591 aa).

At Ala-2 the chain carries N-acetylalanine. HEAT repeat units follow at residues 10 to 48 (DSLY…GEER), 49 to 86 (TRSE…GGPE), 87 to 125 (FAMY…SAQD), 126 to 163 (LEIH…VTQP), 164 to 202 (VKAE…ETEY), 203 to 241 (LKSD…PQDD), 242 to 280 (VEHL…GPEI), 281 to 323 (TRVD…QVQI), 324 to 362 (ILSS…GAYQ), 363 to 401 (TVEQ…GIQQ), 402 to 440 (LSQS…GQEF), 441 to 479 (FDQK…GAPW), 480 to 518 (AEQA…GTDI), 519 to 557 (TTKL…EASV), and 558 to 591 (IDAQ…IAAA).

Belongs to the phosphatase 2A regulatory subunit A family. As to quaternary structure, PP2A exists in several trimeric forms, all of which consist of a core composed of a catalytic subunit associated with a 65 kDa regulatory subunit (PR65) (subunit A). The core complex associates with a third, variable subunit (subunit B), which confers distinct properties to the holoenzyme. Interacts with the inorganic phosphate transporter PXo (CG10483). Component of the Integrator-PP2A (INTAC) complex, composed of the Integrator core complex and protein phosphatase 2A subunits mts/PP2A and Pp2A-29B. As to expression, expression varies in tissues throughout development. Highly distributed expression in early embryos. In late embryonal development, found at high levels in nervous system and gonads. In third instar larvae, found in brain, imaginal disks and salivary glands.

It localises to the nucleus. The PR65 subunit of protein phosphatase 2A serves as a scaffolding molecule to coordinate the assembly of the catalytic subunit and a variable regulatory B subunit. Key mediator of a quality checkpoint during transcription elongation as part of the Integrator-PP2A (INTAC) complex. The INTAC complex drives premature transcription termination of transcripts that are unfavorably configured for transcriptional elongation: within the INTAC complex, acts as a scaffolding subunit for mts/PP2A, which catalyzes dephosphorylation of the C-terminal domain (CTD) of Pol II subunit POLR2A/RPB1 and Spt5, thereby preventing transcriptional elongation. This is Serine/threonine-protein phosphatase PP2A 65 kDa regulatory subunit (Pp2A-29B) from Drosophila melanogaster (Fruit fly).